A 130-amino-acid chain; its full sequence is Secreted RxLR effector protein 66 (130 aa).

The N-terminal stretch at 1-21 (MHLRLLMSTVITATLIVSNNA) is a signal peptide. The short motif at 32 to 62 (RALRGASTVGIAADNLLAAHFSPTLKHKESR) is the RxLR-dEER element. Residues 104-124 (GPAIAIFAGVAATFILIDYLI) form a helical membrane-spanning segment.

It belongs to the RxLR effector family.

It localises to the secreted. It is found in the host cytoplasm. The protein resides in the host nucleus. The protein localises to the membrane. In terms of biological role, effector that acts as a broad suppressor of cell death to interrupt plant immunity. Inhibits cell death induced by cell death-inducing proteins, including the PAMP elicitor INF1 from P.infestans. This is Secreted RxLR effector protein 66 from Plasmopara viticola (Downy mildew of grapevine).